The chain runs to 154 residues: Myoglobin (154 aa).

The region spanning 2-148 (GLSDGEWTLV…FRNDMAAQYK (147 aa)) is the Globin domain. A Phosphoserine modification is found at serine 4. Histidine 65 serves as a coordination point for nitrite. Histidine 65 contacts O2. At threonine 68 the chain carries Phosphothreonine. Heme b is bound at residue histidine 94.

This sequence belongs to the globin family. In terms of assembly, monomeric.

It localises to the cytoplasm. It is found in the sarcoplasm. It carries out the reaction Fe(III)-heme b-[protein] + nitric oxide + H2O = Fe(II)-heme b-[protein] + nitrite + 2 H(+). It catalyses the reaction H2O2 + AH2 = A + 2 H2O. Monomeric heme protein which primary function is to store oxygen and facilitate its diffusion within muscle tissues. Reversibly binds oxygen through a pentacoordinated heme iron and enables its timely and efficient release as needed during periods of heightened demand. Depending on the oxidative conditions of tissues and cells, and in addition to its ability to bind oxygen, it also has a nitrite reductase activity whereby it regulates the production of bioactive nitric oxide. Under stress conditions, like hypoxia and anoxia, it also protects cells against reactive oxygen species thanks to its pseudoperoxidase activity. This is Myoglobin from Capra hircus (Goat).